A 63-amino-acid chain; its full sequence is Potassium channel toxin alpha-KTx 21.1 (63 aa).

The signal sequence occupies residues 1 to 27 (MQFSGVVLILISMTLVNFVFFETKVEA). Disulfide bonds link Cys-33–Cys-53, Cys-38–Cys-58, and Cys-42–Cys-60.

It belongs to the short scorpion toxin superfamily. Potassium channel inhibitor family. Alpha-KTx 21 subfamily. Expressed by the venom gland.

The protein resides in the secreted. Its function is as follows. Reversibly and voltage-independently blocks voltage-gated potassium channels rKv1.2/KCNA2 (73%) (IC(50)=196 nM), hKv1.3/KCNA3 (50%) (IC(50)=508 nM), Shaker IR (30%), rKv1.6/KCNA6 (22%) (at 0.5 uM). Interaction of Ts15 with Kv1.3/KCNA3 is stronger than its interaction with Kv1.2/KCNA2. This is Potassium channel toxin alpha-KTx 21.1 from Tityus serrulatus (Brazilian scorpion).